The following is a 325-amino-acid chain: UPF0164 protein TP_0856 (325 aa).

An N-terminal signal peptide occupies residues Met1 to Ala28.

This sequence belongs to the UPF0164 family.

This is UPF0164 protein TP_0856 from Treponema pallidum (strain Nichols).